Reading from the N-terminus, the 299-residue chain is Coenzyme PQQ synthesis protein B (299 aa).

The protein belongs to the PqqB family.

The protein operates within cofactor biosynthesis; pyrroloquinoline quinone biosynthesis. Functionally, may be involved in the transport of PQQ or its precursor to the periplasm. This is Coenzyme PQQ synthesis protein B from Xanthomonas euvesicatoria pv. vesicatoria (strain 85-10) (Xanthomonas campestris pv. vesicatoria).